The chain runs to 424 residues: Serine--tRNA ligase (424 aa).

231-233 (TAE) lines the L-serine pocket. 261–263 (RSE) contacts ATP. Glu-284 lines the L-serine pocket. 348–351 (ETSS) contacts ATP. Ser-383 provides a ligand contact to L-serine.

The protein belongs to the class-II aminoacyl-tRNA synthetase family. Type-1 seryl-tRNA synthetase subfamily. As to quaternary structure, homodimer. The tRNA molecule binds across the dimer.

Its subcellular location is the cytoplasm. It carries out the reaction tRNA(Ser) + L-serine + ATP = L-seryl-tRNA(Ser) + AMP + diphosphate + H(+). It catalyses the reaction tRNA(Sec) + L-serine + ATP = L-seryl-tRNA(Sec) + AMP + diphosphate + H(+). The protein operates within aminoacyl-tRNA biosynthesis; selenocysteinyl-tRNA(Sec) biosynthesis; L-seryl-tRNA(Sec) from L-serine and tRNA(Sec): step 1/1. Functionally, catalyzes the attachment of serine to tRNA(Ser). Is also able to aminoacylate tRNA(Sec) with serine, to form the misacylated tRNA L-seryl-tRNA(Sec), which will be further converted into selenocysteinyl-tRNA(Sec). The sequence is that of Serine--tRNA ligase from Metamycoplasma arthritidis (strain 158L3-1) (Mycoplasma arthritidis).